We begin with the raw amino-acid sequence, 270 residues long: Aliphatic sulfonates import ATP-binding protein SsuB (270 aa).

The 222-residue stretch at 17 to 238 (LASKGLRKTF…ARGSHRLAAL (222 aa)) folds into the ABC transporter domain. 49 to 56 (GRSGCGKS) is an ATP binding site. The segment at 248–270 (STPGTAPEPDPVAPLPTQLRWAH) is disordered.

It belongs to the ABC transporter superfamily. Aliphatic sulfonates importer (TC 3.A.1.17.2) family. The complex is composed of two ATP-binding proteins (SsuB), two transmembrane proteins (SsuC) and a solute-binding protein (SsuA).

The protein resides in the cell inner membrane. The catalysed reaction is ATP + H2O + aliphatic sulfonate-[sulfonate-binding protein]Side 1 = ADP + phosphate + aliphatic sulfonateSide 2 + [sulfonate-binding protein]Side 1.. Functionally, part of the ABC transporter complex SsuABC involved in aliphatic sulfonates import. Responsible for energy coupling to the transport system. This chain is Aliphatic sulfonates import ATP-binding protein SsuB, found in Pseudomonas putida (strain ATCC 47054 / DSM 6125 / CFBP 8728 / NCIMB 11950 / KT2440).